Consider the following 206-residue polypeptide: Large ribosomal subunit protein uL22m (206 aa).

The N-terminal 40 residues, 1–40, are a transit peptide targeting the mitochondrion; that stretch reads MAAALLRELGALRVPNLRIWATQTLRVLPPSCIHTSASLD.

The protein belongs to the universal ribosomal protein uL22 family. As to quaternary structure, component of the mitochondrial ribosome large subunit (39S) which comprises a 16S rRNA and about 50 distinct proteins.

The protein resides in the mitochondrion. In Mus musculus (Mouse), this protein is Large ribosomal subunit protein uL22m (Mrpl22).